Reading from the N-terminus, the 536-residue chain is Protein ST7 homolog (536 aa).

2 helical membrane passes run Cys3–Leu23 and Phe49–Trp69. Residues Ala192–Thr219 are a coiled coil. The helical transmembrane segment at Ser464–Leu484 threads the bilayer.

Belongs to the ST7 family.

It is found in the membrane. The sequence is that of Protein ST7 homolog from Caenorhabditis briggsae.